Consider the following 501-residue polypeptide: ATP synthase subunit alpha (501 aa).

169 to 176 (GDRQTGKT) lines the ATP pocket.

This sequence belongs to the ATPase alpha/beta chains family. As to quaternary structure, F-type ATPases have 2 components, CF(1) - the catalytic core - and CF(0) - the membrane proton channel. CF(1) has five subunits: alpha(3), beta(3), gamma(1), delta(1), epsilon(1). CF(0) has three main subunits: a(1), b(2) and c(9-12). The alpha and beta chains form an alternating ring which encloses part of the gamma chain. CF(1) is attached to CF(0) by a central stalk formed by the gamma and epsilon chains, while a peripheral stalk is formed by the delta and b chains.

Its subcellular location is the cell inner membrane. The catalysed reaction is ATP + H2O + 4 H(+)(in) = ADP + phosphate + 5 H(+)(out). In terms of biological role, produces ATP from ADP in the presence of a proton gradient across the membrane. The alpha chain is a regulatory subunit. The protein is ATP synthase subunit alpha of Campylobacter jejuni subsp. jejuni serotype O:23/36 (strain 81-176).